Consider the following 110-residue polypeptide: Prothymosin alpha (110 aa).

Residue Met-1 is modified to N-acetylmethionine. The tract at residues 1 to 110 (MSDAAVDTSS…TKKQKTDEDD (110 aa)) is disordered. Ser-2 is modified (N-acetylserine; in Prothymosin alpha, N-terminally processed). Ser-2 bears the Phosphoserine mark. Thr-8 bears the Phosphothreonine; by CK2 mark. A phosphoserine mark is found at Ser-9 and Ser-10. Thr-13 and Thr-14 each carry phosphothreonine; by CK2. Residues 13 to 31 (TTKDLKEKKEVVEEAENGR) show a composition bias toward basic and acidic residues. Lys-15 bears the N6-acetyllysine; alternate mark. Lys-15 bears the N6-succinyllysine; alternate mark. Over residues 32–41 (EAPANGNANE) the composition is skewed to low complexity. A compositionally biased stretch (acidic residues) spans 42 to 83 (ENGEQEADNEVDEEEEEGGEEEEEEEEGDGEEEDGDEDEEAE). Over residues 100 to 110 (DTKKQKTDEDD) the composition is skewed to basic and acidic residues. A Phosphothreonine modification is found at Thr-101. Lys-102 is modified (N6-acetyllysine; alternate). Lys-102 is covalently cross-linked (Glycyl lysine isopeptide (Lys-Gly) (interchain with G-Cter in SUMO2); alternate). Thr-106 bears the Phosphothreonine mark.

Belongs to the pro/parathymosin family. Interacts with NUPR1; regulates apoptotic process. Post-translationally, covalently linked to a small RNA of about 20 nucleotides.

The protein localises to the nucleus. In terms of biological role, prothymosin alpha may mediate immune function by conferring resistance to certain opportunistic infections. This is Prothymosin alpha (PTMA) from Bos taurus (Bovine).